We begin with the raw amino-acid sequence, 186 residues long: Nucleoside diphosphate kinase, mitochondrial (186 aa).

A mitochondrion-targeting transit peptide spans 1–32 (MGSLFGRVAALRALLCGPRFQCLLVRPSSGGP). ATP-binding residues include Lys44, Phe92, Arg120, Thr126, Arg137, and Asn147. The active-site Pros-phosphohistidine intermediate is the His150.

Belongs to the NDK family. In terms of assembly, homohexamer. Interacts with OPA1. Interacts with CAPN8. Requires Mg(2+) as cofactor. As to expression, expressed in the base region of the oxyntic and pyloric mucosae.

Its subcellular location is the mitochondrion intermembrane space. The protein localises to the mitochondrion matrix. The enzyme catalyses a 2'-deoxyribonucleoside 5'-diphosphate + ATP = a 2'-deoxyribonucleoside 5'-triphosphate + ADP. It carries out the reaction a ribonucleoside 5'-diphosphate + ATP = a ribonucleoside 5'-triphosphate + ADP. Its function is as follows. Major role in the synthesis of nucleoside triphosphates other than ATP. The ATP gamma phosphate is transferred to the NDP beta phosphate via a ping-pong mechanism, using a phosphorylated active-site intermediate. Through the catalyzed exchange of gamma-phosphate between di- and triphosphonucleosides participates in regulation of intracellular nucleotide homeostasis. Binds to anionic phospholipids, predominantly to cardiolipin; the binding inhibits its phosphotransfer activity. Acts as a mitochondria-specific NDK; its association with cardiolipin-containing mitochondrial inner membrane is coupled to respiration suggesting that ADP locally regenerated in the mitochondrion innermembrane space by its activity is directly taken up via ANT ADP/ATP translocase into the matrix space to stimulate respiratory ATP regeneration. Proposed to increase GTP-loading on dynamin-related GTPase OPA1 in mitochondria. In vitro can induce liposome cross-linking suggesting that it can cross-link inner and outer membranes to form contact sites, and promotes intermembrane migration of anionic phosphoplipids. Promotes the redistribution of cardiolipin between the mitochondrial inner membrane and outer membrane which is implicated in pro-apoptotic signaling. The polypeptide is Nucleoside diphosphate kinase, mitochondrial (Nme4) (Mus musculus (Mouse)).